A 159-amino-acid chain; its full sequence is Ribosomal RNA large subunit methyltransferase H (159 aa).

Residues Leu76, Gly108, and Phe127–Phe132 contribute to the S-adenosyl-L-methionine site.

This sequence belongs to the RNA methyltransferase RlmH family. Homodimer.

The protein resides in the cytoplasm. The catalysed reaction is pseudouridine(1915) in 23S rRNA + S-adenosyl-L-methionine = N(3)-methylpseudouridine(1915) in 23S rRNA + S-adenosyl-L-homocysteine + H(+). In terms of biological role, specifically methylates the pseudouridine at position 1915 (m3Psi1915) in 23S rRNA. The protein is Ribosomal RNA large subunit methyltransferase H of Lachnospira eligens (strain ATCC 27750 / DSM 3376 / VPI C15-48 / C15-B4) (Eubacterium eligens).